The sequence spans 513 residues: Probable cytosol aminopeptidase (513 aa).

Mn(2+) contacts are provided by Lys275 and Asp280. Residue Lys287 is part of the active site. Mn(2+)-binding residues include Asp298, Asp357, and Glu359. Residue Arg361 is part of the active site.

This sequence belongs to the peptidase M17 family. It depends on Mn(2+) as a cofactor.

The protein localises to the cytoplasm. It carries out the reaction Release of an N-terminal amino acid, Xaa-|-Yaa-, in which Xaa is preferably Leu, but may be other amino acids including Pro although not Arg or Lys, and Yaa may be Pro. Amino acid amides and methyl esters are also readily hydrolyzed, but rates on arylamides are exceedingly low.. The catalysed reaction is Release of an N-terminal amino acid, preferentially leucine, but not glutamic or aspartic acids.. Presumably involved in the processing and regular turnover of intracellular proteins. Catalyzes the removal of unsubstituted N-terminal amino acids from various peptides. In Streptomyces avermitilis (strain ATCC 31267 / DSM 46492 / JCM 5070 / NBRC 14893 / NCIMB 12804 / NRRL 8165 / MA-4680), this protein is Probable cytosol aminopeptidase.